We begin with the raw amino-acid sequence, 510 residues long: GMP synthase [glutamine-hydrolyzing] (510 aa).

Residues 5-195 (TVVVLDFGGQ…LFEICGLRGD (191 aa)) enclose the Glutamine amidotransferase type-1 domain. The Nucleophile role is filled by Cys-82. Residues His-169 and Glu-171 contribute to the active site. A GMPS ATP-PPase domain is found at 196–385 (WDLSDFISEA…LGIPAEILWR (190 aa)). 223 to 229 (SGGVDSS) serves as a coordination point for ATP.

In terms of assembly, homodimer.

The enzyme catalyses XMP + L-glutamine + ATP + H2O = GMP + L-glutamate + AMP + diphosphate + 2 H(+). It participates in purine metabolism; GMP biosynthesis; GMP from XMP (L-Gln route): step 1/1. In terms of biological role, catalyzes the synthesis of GMP from XMP. The polypeptide is GMP synthase [glutamine-hydrolyzing] (Syntrophomonas wolfei subsp. wolfei (strain DSM 2245B / Goettingen)).